Here is a 432-residue protein sequence, read N- to C-terminus: Adenylosuccinate synthetase (432 aa).

GTP-binding positions include 13–19 (GDEGKGK) and 41–43 (GHT). D14 (proton acceptor) is an active-site residue. Positions 14 and 41 each coordinate Mg(2+). IMP is bound by residues 14–17 (DEGK), 39–42 (NAGH), T130, R144, Q225, T240, and R304. H42 acts as the Proton donor in catalysis. 300 to 306 (ATTGRRR) serves as a coordination point for substrate. Residues R306, 332–334 (KLD), and 415–417 (STG) each bind GTP.

It belongs to the adenylosuccinate synthetase family. As to quaternary structure, homodimer. Mg(2+) is required as a cofactor.

It localises to the cytoplasm. The catalysed reaction is IMP + L-aspartate + GTP = N(6)-(1,2-dicarboxyethyl)-AMP + GDP + phosphate + 2 H(+). The protein operates within purine metabolism; AMP biosynthesis via de novo pathway; AMP from IMP: step 1/2. Functionally, plays an important role in the de novo pathway of purine nucleotide biosynthesis. Catalyzes the first committed step in the biosynthesis of AMP from IMP. The chain is Adenylosuccinate synthetase from Baumannia cicadellinicola subsp. Homalodisca coagulata.